We begin with the raw amino-acid sequence, 1323 residues long: Clustered mitochondria protein homolog (1323 aa).

Residues 103–141 (KEKPYNLAAIYDHLNKFREVIGLHFLDKYSSEVGVLSGV) form a TPR 1 repeat. Positions 149-186 (LQDVKETEPETQDDKDKETDETKSTKEDSNQTEEKKSE) are disordered. Over residues 150–186 (QDVKETEPETQDDKDKETDETKSTKEDSNQTEEKKSE) the composition is skewed to basic and acidic residues. In terms of domain architecture, Clu spans 351 to 608 (FANQPDASRS…RATPLDIEFI (258 aa)). One copy of the TPR 2 repeat lies at 530–563 (CYGLSTDGSKIFSDSSFENVLKPIAEAFHLKPHP). The segment covering 764 to 801 (NEEEISKRKEESEKKATEGKDQDKEEEKANDNEKNKED) has biased composition (basic and acidic residues). Residues 764-808 (NEEEISKRKEESEKKATEGKDQDKEEEKANDNEKNKEDDKEEVSN) form a disordered region. TPR repeat units follow at residues 1042–1076 (LSVYEQIYGRVHPETSKFYGLLSQYYAELGLKSEA), 1099–1132 (ITAYINSAFFESTNDDYINALNLYNKAINDWTLV), 1141–1174 (VNTYANLAELLSEHKLFQQANKLFEKAISISTKL), and 1183–1216 (GMLRYRYGGTLLGGGDFKSALDQFKSANDIFTKF). The interval 1250-1323 (KALAQQASAS…KKSNNKKSKK (74 aa)) is disordered. The span at 1308–1323 (PKKQLKKKSNNKKSKK) shows a compositional bias: basic residues.

This sequence belongs to the CLU family. As to quaternary structure, may associate with the eukaryotic translation initiation factor 3 (eIF-3) complex.

Its subcellular location is the cytoplasm. In terms of biological role, mRNA-binding protein involved in proper cytoplasmic distribution of mitochondria. The sequence is that of Clustered mitochondria protein homolog from Debaryomyces hansenii (strain ATCC 36239 / CBS 767 / BCRC 21394 / JCM 1990 / NBRC 0083 / IGC 2968) (Yeast).